The primary structure comprises 879 residues: Alanine--tRNA ligase (879 aa).

Zn(2+) is bound by residues H566, H570, C668, and H672.

This sequence belongs to the class-II aminoacyl-tRNA synthetase family. Zn(2+) serves as cofactor.

Its subcellular location is the cytoplasm. It catalyses the reaction tRNA(Ala) + L-alanine + ATP = L-alanyl-tRNA(Ala) + AMP + diphosphate. Catalyzes the attachment of alanine to tRNA(Ala) in a two-step reaction: alanine is first activated by ATP to form Ala-AMP and then transferred to the acceptor end of tRNA(Ala). Also edits incorrectly charged Ser-tRNA(Ala) and Gly-tRNA(Ala) via its editing domain. The protein is Alanine--tRNA ligase of Oceanobacillus iheyensis (strain DSM 14371 / CIP 107618 / JCM 11309 / KCTC 3954 / HTE831).